Reading from the N-terminus, the 101-residue chain is Small ribosomal subunit protein uS14 (101 aa).

The disordered stretch occupies residues 51–72; that stretch reads LPRDSSPSRQRNPCRQTGRPHG. Polar residues predominate over residues 52 to 65; the sequence is PRDSSPSRQRNPCR.

Belongs to the universal ribosomal protein uS14 family. Part of the 30S ribosomal subunit. Contacts proteins S3 and S10.

Its function is as follows. Binds 16S rRNA, required for the assembly of 30S particles and may also be responsible for determining the conformation of the 16S rRNA at the A site. The chain is Small ribosomal subunit protein uS14 from Buchnera aphidicola subsp. Acyrthosiphon kondoi (Acyrthosiphon kondoi symbiotic bacterium).